Consider the following 94-residue polypeptide: Large ribosomal subunit protein bL31 (94 aa).

Residues 65–94 (YGMADSENDSTDKKKTTNEKKVSDSPSKES) are disordered. A compositionally biased stretch (basic and acidic residues) spans 74 to 94 (STDKKKTTNEKKVSDSPSKES).

It belongs to the bacterial ribosomal protein bL31 family. Type A subfamily. As to quaternary structure, part of the 50S ribosomal subunit.

Binds the 23S rRNA. This chain is Large ribosomal subunit protein bL31, found in Prochlorococcus marinus (strain MIT 9211).